A 242-amino-acid polypeptide reads, in one-letter code: MATVSMRDMLKAGVHFGHQTRYWNPKMKPFIFGARNRVHIINLEKTVPMFNEALAELAKVGEKKGKVLFVGTKRAASEAVKEAAIASNQFYVNNRWLGGMLTNYKTVRQSIKRLKELEIQSQDGTFDKLTKKEALMRTREMEKLEKSLGGIKDMGGLPDALFVIDADHEHIAIKEANNLGIPVYAVVDTNSNPDGVDYIIPGNDDAIRAVQLYLNAAASAVTEGRNKDVAVVAEKDGFVEAE.

Belongs to the universal ribosomal protein uS2 family.

The polypeptide is Small ribosomal subunit protein uS2 (Vibrio parahaemolyticus serotype O3:K6 (strain RIMD 2210633)).